Consider the following 130-residue polypeptide: Histone H2B.1 (130 aa).

Residues 1–19 show a composition bias toward basic and acidic residues; that stretch reads MAPKAEKKPASKAPAEKKP. Residues 1–39 are disordered; the sequence is MAPKAEKKPASKAPAEKKPAAKKTASATGTKKRSKTRKE. Residues Lys7 and Lys8 each carry the N6-acetyllysine; alternate modification. Glycyl lysine isopeptide (Lys-Gly) (interchain with G-Cter in SUMO); alternate cross-links involve residues Lys7 and Lys8. Ser11 is subject to Phosphoserine. At Lys12 the chain carries N6-acetyllysine. Lys17 is subject to N6-acetyllysine; alternate. Lys17 is covalently cross-linked (Glycyl lysine isopeptide (Lys-Gly) (interchain with G-Cter in SUMO); alternate). Lys18 is covalently cross-linked (Glycyl lysine isopeptide (Lys-Gly) (interchain with G-Cter in SUMO)). Residue Lys124 forms a Glycyl lysine isopeptide (Lys-Gly) (interchain with G-Cter in ubiquitin) linkage.

Belongs to the histone H2B family. As to quaternary structure, the nucleosome is a histone octamer containing two molecules each of H2A, H2B, H3 and H4 assembled in one H3-H4 heterotetramer and two H2A-H2B heterodimers. The octamer wraps approximately 147 bp of DNA. In terms of processing, monoubiquitinated by the UBC2-BRE1 complex to form H2BK123ub1. H2BK123ub1 gives a specific tag for epigenetic transcriptional activation and is also prerequisite for H3K4me and H3K79me formation. H2BK123ub1 also modulates the formation of double-strand breaks during meiosis and is a prerequisite for DNA-damage checkpoint activation. Post-translationally, phosphorylated by STE20 to form H2BS10ph during progression through meiotic prophase. May be correlated with chromosome condensation. Acetylated by GCN5 to form H2BK11ac and H2BK16ac. H2BK16ac can also be formed by ESA1. Acetylation of N-terminal lysines and particularly formation of H2BK11acK16ac has a positive effect on transcription. In terms of processing, sumoylation to form H2BK6su or H2BK7su, and probably also H2BK16su or H2BK17su, occurs preferentially near the telomeres and represses gene transcription.

It is found in the nucleus. The protein resides in the chromosome. Core component of nucleosome. Nucleosomes wrap and compact DNA into chromatin, limiting DNA accessibility to the cellular machineries which require DNA as a template. Histones thereby play a central role in transcription regulation, DNA repair, DNA replication and chromosomal stability. DNA accessibility is regulated via a complex set of post-translational modifications of histones, also called histone code, and nucleosome remodeling. The polypeptide is Histone H2B.1 (HTB1) (Debaryomyces hansenii (strain ATCC 36239 / CBS 767 / BCRC 21394 / JCM 1990 / NBRC 0083 / IGC 2968) (Yeast)).